A 215-amino-acid chain; its full sequence is MPLPSKEELKEAIVKAVQYSPKRNFKQSVELIVVLKDVDPRSPEGRIRETIFLPKGLGKDKIICVVADGEMAEKARAGGAHRVITRDELLALSKKDAKKVAQECDWVLVRTDLMANAGRILGPALGPRGKIPVPVPPAADIVSVMNRYKSAILLRNKDQPQLMTRIGTEDMNPEDLVINAQTILSRLETKLPNGAHNIAKIVVKTTMGPPIEVMG.

This sequence belongs to the universal ribosomal protein uL1 family. As to quaternary structure, part of the 50S ribosomal subunit.

Functionally, binds directly to 23S rRNA. Probably involved in E site tRNA release. In terms of biological role, protein L1 is also a translational repressor protein, it controls the translation of its operon by binding to its mRNA. The polypeptide is Large ribosomal subunit protein uL1 (Staphylothermus marinus (strain ATCC 43588 / DSM 3639 / JCM 9404 / F1)).